Consider the following 185-residue polypeptide: MKRWYVVHAYSGFEKSVAQALRDRISRIEIQDRFGDVLVPAEEVVEMRSGQKRRSEHKFFPGYVLIQIETYYEGGVPRIDNECWHLVKETPKVMGFIGGTADRPLPISSDEADAILRRVQDGAEKPRPKVLFEPGQMVRVIDGPFNDFDGLVEEVNYEKNRLRVAVLIFGRPTPVDLEFGQVQKS.

Residues 134 to 162 form the KOW domain; sequence PGQMVRVIDGPFNDFDGLVEEVNYEKNRL.

It belongs to the NusG family.

In terms of biological role, participates in transcription elongation, termination and antitermination. The polypeptide is Transcription termination/antitermination protein NusG (Xylella fastidiosa (strain 9a5c)).